Reading from the N-terminus, the 286-residue chain is Homoserine kinase (286 aa).

An ATP-binding site is contributed by 78-88 (PLARGLGSSSS).

Belongs to the GHMP kinase family. Homoserine kinase subfamily.

Its subcellular location is the cytoplasm. The enzyme catalyses L-homoserine + ATP = O-phospho-L-homoserine + ADP + H(+). The protein operates within amino-acid biosynthesis; L-threonine biosynthesis; L-threonine from L-aspartate: step 4/5. Its function is as follows. Catalyzes the ATP-dependent phosphorylation of L-homoserine to L-homoserine phosphate. This Streptococcus suis (strain 98HAH33) protein is Homoserine kinase.